The following is a 98-amino-acid chain: Small ribosomal subunit protein uS17 (98 aa).

Residues 1 to 21 are disordered; it reads MADQKGPKYTPAAEKPRGRRK. Residue Lys96 forms an Isoglutamyl lysine isopeptide (Lys-Gln) (interchain with Q-Cter in protein Pup) linkage.

This sequence belongs to the universal ribosomal protein uS17 family. Part of the 30S ribosomal subunit.

One of the primary rRNA binding proteins, it binds specifically to the 5'-end of 16S ribosomal RNA. This is Small ribosomal subunit protein uS17 (rpsQ) from Mycolicibacterium smegmatis (strain ATCC 700084 / mc(2)155) (Mycobacterium smegmatis).